Consider the following 311-residue polypeptide: 4-diphosphocytidyl-2-C-methyl-D-erythritol kinase (311 aa).

Residue K13 is part of the active site. 114–124 contacts ATP; the sequence is PVAGGMAGGSA. D156 is a catalytic residue.

This sequence belongs to the GHMP kinase family. IspE subfamily.

The enzyme catalyses 4-CDP-2-C-methyl-D-erythritol + ATP = 4-CDP-2-C-methyl-D-erythritol 2-phosphate + ADP + H(+). It participates in isoprenoid biosynthesis; isopentenyl diphosphate biosynthesis via DXP pathway; isopentenyl diphosphate from 1-deoxy-D-xylulose 5-phosphate: step 3/6. Functionally, catalyzes the phosphorylation of the position 2 hydroxy group of 4-diphosphocytidyl-2C-methyl-D-erythritol. This is 4-diphosphocytidyl-2-C-methyl-D-erythritol kinase from Corynebacterium diphtheriae (strain ATCC 700971 / NCTC 13129 / Biotype gravis).